Reading from the N-terminus, the 397-residue chain is Protein Brevis radix-like 1 (397 aa).

Disordered regions lie at residues Gly14 to Cys37 and Arg105 to Glu148. The span at Ala124–Glu148 shows a compositional bias: acidic residues. Positions Lys150 to Asn205 constitute a BRX 1 domain. Disordered stretches follow at residues Gln212–His278 and Ser300–Arg342. Residues Lys220 to Ile230 show a composition bias toward basic and acidic residues. The span at Ser309–Ser320 shows a compositional bias: low complexity. The region spanning Arg342 to Leu397 is the BRX 2 domain.

Belongs to the BRX family.

Its subcellular location is the nucleus. The chain is Protein Brevis radix-like 1 (BRXL1) from Oryza sativa subsp. japonica (Rice).